The following is a 297-amino-acid chain: uncharacterized protein (297 aa).

Positions 128 to 156 (RGVIVEQESEAAAEKDELESLAKVLESDF) form a coiled coil.

This is an uncharacterized protein from Bacillus subtilis (strain 168).